The chain runs to 405 residues: 8-amino-7-oxononanoate synthase (405 aa).

Residue R23 coordinates substrate. 114 to 115 (GY) is a binding site for pyridoxal 5'-phosphate. H139 provides a ligand contact to substrate. S185, H213, and T245 together coordinate pyridoxal 5'-phosphate. K248 bears the N6-(pyridoxal phosphate)lysine mark. T366 contributes to the substrate binding site.

This sequence belongs to the class-II pyridoxal-phosphate-dependent aminotransferase family. BioF subfamily. Homodimer. Pyridoxal 5'-phosphate serves as cofactor.

It catalyses the reaction 6-carboxyhexanoyl-[ACP] + L-alanine + H(+) = (8S)-8-amino-7-oxononanoate + holo-[ACP] + CO2. Its pathway is cofactor biosynthesis; biotin biosynthesis. Catalyzes the decarboxylative condensation of pimeloyl-[acyl-carrier protein] and L-alanine to produce 8-amino-7-oxononanoate (AON), [acyl-carrier protein], and carbon dioxide. This chain is 8-amino-7-oxononanoate synthase, found in Delftia acidovorans (strain DSM 14801 / SPH-1).